The chain runs to 423 residues: MFMREIELRGHIIDSLILPKVFDKILDMGGDYKVLEFEIGKRKTDPSYAKILVIGRDERHVDEILNELRDLGAEIPEIEEVELQPAEKDMVLPEGFYSTTNHKTFIRFKGKWIEVENQKMDGAIVVYPDEMRAEVKTIRNIKKGDLVVVGHKGVRVIPPEKPREGGGLFEFMKSDASSEKPKETIIRRIAKEMYEIREKYRKTGKGGIVVVGGPAIIHTGAGWALAKLIRMGYVQALFAGNALATHDIESVLYGTSLGVDLKTGKSVPGGHSHHLRAINTIMRAGSIKDAVEQGILKEGVMYECIKNNIPYVLAGSIRDDGPLPDVITDVVKAQEKMRELLKGKDMVLMLSTMLHSIATGNLLPSWVKTICVDINPAVVTKLMDRGTSQALGIVTDVGVFLPMLVEELEKLEKEKEKSEKREE.

NAD(+) is bound by residues asparagine 241, alanine 242, aspartate 320, threonine 352, methionine 353, leucine 354, histidine 355, aspartate 373, aspartate 396, and valine 397.

Belongs to the AgrE/ArgZ ornithine cyclodeaminase family. The cofactor is NAD(+).

The enzyme catalyses L-ornithine = L-proline + NH4(+). Functionally, catalyzes the conversion of ornithine to proline, with the release of ammonia. The polypeptide is Ornithine cyclodeaminase (Methanocaldococcus jannaschii (strain ATCC 43067 / DSM 2661 / JAL-1 / JCM 10045 / NBRC 100440) (Methanococcus jannaschii)).